The following is a 313-amino-acid chain: Pyrimidine-specific ribonucleoside hydrolase RihB (313 aa).

The active-site Proton acceptor is the D11. 3 residues coordinate Ca(2+): D11, D16, and V124. Substrate contacts are provided by Q227 and H239. D240 serves as a coordination point for Ca(2+).

This sequence belongs to the IUNH family. RihB subfamily. In terms of assembly, homotetramer. Ca(2+) is required as a cofactor.

The catalysed reaction is a pyrimidine ribonucleoside + H2O = a pyrimidine nucleobase + D-ribose. In terms of biological role, hydrolyzes cytidine or uridine to ribose and cytosine or uracil, respectively. Has a clear preference for cytidine over uridine. Strictly specific for ribonucleosides. This chain is Pyrimidine-specific ribonucleoside hydrolase RihB, found in Escherichia coli O1:K1 / APEC.